Consider the following 197-residue polypeptide: ATP-dependent Clp protease proteolytic subunit (197 aa).

Residue S98 is the Nucleophile of the active site. The active site involves H123.

This sequence belongs to the peptidase S14 family. Fourteen ClpP subunits assemble into 2 heptameric rings which stack back to back to give a disk-like structure with a central cavity, resembling the structure of eukaryotic proteasomes.

The protein localises to the cytoplasm. It carries out the reaction Hydrolysis of proteins to small peptides in the presence of ATP and magnesium. alpha-casein is the usual test substrate. In the absence of ATP, only oligopeptides shorter than five residues are hydrolyzed (such as succinyl-Leu-Tyr-|-NHMec, and Leu-Tyr-Leu-|-Tyr-Trp, in which cleavage of the -Tyr-|-Leu- and -Tyr-|-Trp bonds also occurs).. Cleaves peptides in various proteins in a process that requires ATP hydrolysis. Has a chymotrypsin-like activity. Plays a major role in the degradation of misfolded proteins. This is ATP-dependent Clp protease proteolytic subunit from Limosilactobacillus reuteri (strain DSM 20016) (Lactobacillus reuteri).